The primary structure comprises 25 residues: Caerin-1.7 (25 aa).

Leu25 bears the Leucine amide mark.

The protein belongs to the frog skin active peptide (FSAP) family. Caerin subfamily. Caerin-1.7.1 does not have any antibacterial activity. In terms of tissue distribution, expressed by the skin dorsal glands.

It localises to the secreted. Its function is as follows. Antibacterial peptide, that adopts an alpha helical conformation which can disrupt bacterial membranes. Each caerin displays a different antimicrobial specificity. The chain is Caerin-1.7 from Ranoidea xanthomera (Northern orange-eyed tree frog).